A 424-amino-acid chain; its full sequence is 3-phosphoshikimate 1-carboxyvinyltransferase (424 aa).

Positions 20, 21, and 25 each coordinate 3-phosphoshikimate. Lys-20 serves as a coordination point for phosphoenolpyruvate. Residues Gly-92 and Arg-120 each coordinate phosphoenolpyruvate. 4 residues coordinate 3-phosphoshikimate: Ser-165, Gln-167, Asp-313, and Lys-340. Gln-167 serves as a coordination point for phosphoenolpyruvate. Catalysis depends on Asp-313, which acts as the Proton acceptor. Phosphoenolpyruvate is bound by residues Arg-344 and Arg-386.

This sequence belongs to the EPSP synthase family. In terms of assembly, monomer.

Its subcellular location is the cytoplasm. It carries out the reaction 3-phosphoshikimate + phosphoenolpyruvate = 5-O-(1-carboxyvinyl)-3-phosphoshikimate + phosphate. It participates in metabolic intermediate biosynthesis; chorismate biosynthesis; chorismate from D-erythrose 4-phosphate and phosphoenolpyruvate: step 6/7. Functionally, catalyzes the transfer of the enolpyruvyl moiety of phosphoenolpyruvate (PEP) to the 5-hydroxyl of shikimate-3-phosphate (S3P) to produce enolpyruvyl shikimate-3-phosphate and inorganic phosphate. This chain is 3-phosphoshikimate 1-carboxyvinyltransferase, found in Bacillus cytotoxicus (strain DSM 22905 / CIP 110041 / 391-98 / NVH 391-98).